The following is a 323-amino-acid chain: NADH-ubiquinone oxidoreductase chain 1 (323 aa).

Helical transmembrane passes span Val-8–Leu-28, Phe-74–Met-94, Leu-105–Gly-125, Ile-145–Phe-165, Ser-176–Ala-196, Ile-236–Phe-256, Glu-258–Val-278, and Phe-298–Gly-318.

Belongs to the complex I subunit 1 family.

The protein localises to the mitochondrion inner membrane. The catalysed reaction is a ubiquinone + NADH + 5 H(+)(in) = a ubiquinol + NAD(+) + 4 H(+)(out). Core subunit of the mitochondrial membrane respiratory chain NADH dehydrogenase (Complex I) that is believed to belong to the minimal assembly required for catalysis. Complex I functions in the transfer of electrons from NADH to the respiratory chain. The immediate electron acceptor for the enzyme is believed to be ubiquinone. The sequence is that of NADH-ubiquinone oxidoreductase chain 1 (MT-ND1) from Oncorhynchus mykiss (Rainbow trout).